Consider the following 603-residue polypeptide: F-box only protein 46 (603 aa).

Residues 20–63 are disordered; the sequence is YSQNQPRPPSAALKPSACPEPGGGAEPDHGPAHSENTPPALATE. Residues serine 21 and serine 67 each carry the phosphoserine; by ATM modification. 4 disordered regions span residues 111–163, 235–301, 326–360, and 396–440; these read GGSR…PASA, EAQR…ARAK, LLAR…RDCG, and TVSP…AEGT. A compositionally biased stretch (low complexity) spans 152-163; sequence GPPAAEEGPASA. Serine 338 bears the Phosphoserine mark. At threonine 347 the chain carries Phosphothreonine. Pro residues-rich tracts occupy residues 347 to 356 and 417 to 426; these read TPPAPPPPPA and DGPPEPPPAD. In terms of domain architecture, F-box spans 470 to 522; it reads RQYMLLLPEHVLVKIFSFLPTRALAALKCTCHHFKGIIEAFGVRATDSRWSRD.

Part of a SCF (SKP1-cullin-F-box) protein ligase complex SCF(FBXO46) composed of CUL1, SKP1, RBX1 and FBXO46. Post-translationally, phosphorylated by ATM in response to DNA damage, promoting ubiquitination and degradation by the SCF(FBXO31) complex. In terms of processing, ATM-phosphorylated FBXO46 is ubiquitinated and degradaded by the SCF(FBXO31) complex in response to DNA damage.

Its pathway is protein modification; protein ubiquitination. Substrate-recognition component of the SCF(FBXO46) protein ligase complex, which mediates the ubiquitination and degradation of target proteins. In absence of stress, the SCF(FBXO46) complex catalyzes ubiquitination and degradation of MTOR-phosphorylated FBXO31. This is F-box only protein 46 from Homo sapiens (Human).